Here is a 207-residue protein sequence, read N- to C-terminus: Pyridoxine/pyridoxamine 5'-phosphate oxidase (207 aa).

FMN contacts are provided by residues 53–58 (RMVLLK), 68–69 (YT), Lys75, and Gln97. Lys58 is a substrate binding site. Tyr115, Arg119, and Ser123 together coordinate substrate. Residues 132–133 (QS) and Trp177 each bind FMN. 183–185 (RLH) lines the substrate pocket. Arg187 serves as a coordination point for FMN.

Belongs to the pyridoxamine 5'-phosphate oxidase family. As to quaternary structure, homodimer. It depends on FMN as a cofactor.

It carries out the reaction pyridoxamine 5'-phosphate + O2 + H2O = pyridoxal 5'-phosphate + H2O2 + NH4(+). The catalysed reaction is pyridoxine 5'-phosphate + O2 = pyridoxal 5'-phosphate + H2O2. The protein operates within cofactor metabolism; pyridoxal 5'-phosphate salvage; pyridoxal 5'-phosphate from pyridoxamine 5'-phosphate: step 1/1. It participates in cofactor metabolism; pyridoxal 5'-phosphate salvage; pyridoxal 5'-phosphate from pyridoxine 5'-phosphate: step 1/1. Functionally, catalyzes the oxidation of either pyridoxine 5'-phosphate (PNP) or pyridoxamine 5'-phosphate (PMP) into pyridoxal 5'-phosphate (PLP). The polypeptide is Pyridoxine/pyridoxamine 5'-phosphate oxidase (Bartonella quintana (strain Toulouse) (Rochalimaea quintana)).